Consider the following 773-residue polypeptide: Protein FAM149A (773 aa).

Composition is skewed to low complexity over residues 18–37 (TSTAPPAGPSSRPSGGAAAA) and 54–90 (LLRALAPDSPSASRRSPAPLLSSPYSRGSAASRAAGA). Disordered stretches follow at residues 18 to 155 (TSTA…RELG), 173 to 210 (DIGEEGASDGDSGDGEARGLSEGRRRHGFTVRSKDSLP), 232 to 264 (FSSSGSHTPTGAHTSWSGSATQSSTTGSSTERG), and 568 to 613 (TQNE…PWRL). Over residues 174–186 (IGEEGASDGDSGD) the composition is skewed to acidic residues. Residues 245 to 264 (TSWSGSATQSSTTGSSTERG) show a composition bias toward low complexity.

Belongs to the FAM149 family.

The protein is Protein FAM149A (FAM149A) of Homo sapiens (Human).